The primary structure comprises 801 residues: Xaa-Pro dipeptidyl-peptidase (801 aa).

Active-site charge relay system residues include Ser-371, Asp-491, and His-522.

Belongs to the peptidase S15 family. In terms of assembly, homodimer.

It localises to the cytoplasm. It catalyses the reaction Hydrolyzes Xaa-Pro-|- bonds to release unblocked, N-terminal dipeptides from substrates including Ala-Pro-|-p-nitroanilide and (sequentially) Tyr-Pro-|-Phe-Pro-|-Gly-Pro-|-Ile.. Its function is as follows. Removes N-terminal dipeptides sequentially from polypeptides having unsubstituted N-termini provided that the penultimate residue is proline. The polypeptide is Xaa-Pro dipeptidyl-peptidase (Ligilactobacillus salivarius (strain UCC118) (Lactobacillus salivarius)).